The chain runs to 39 residues: Phosphatase RapI inhibitor (39 aa).

A propeptide spanning residues 1–34 (MKISRILLAAVILSSVFSITYLQSDHNTEIKVAA) is cleaved from the precursor.

It belongs to the Phr family. Contains a predicted signal peptide cleavage site in the N-terminal region, however the propeptide is probably subject to only one processing event, at the N-terminal end of the mature peptide.

The protein localises to the secreted. Its subcellular location is the cytoplasm. Its function is as follows. Intercellular signaling molecule that inhibits excision of the mobile genetic element ICEBs1 when cells are crowded by cells that contain ICEBs1 and produce the PhrI peptide. Secreted during production, but the mature peptide acts intracellularly, indicating that it needs to be imported into the cell to function. Acts by inhibiting RapI activity. The protein is Phosphatase RapI inhibitor (phrI) of Bacillus subtilis (strain 168).